The following is a 340-amino-acid chain: MSSSSAHQKASPPIEEEATEHGPFPIEQLQASGIAALDVKKLKDAGLCTVESVAYSPRKDLLQIKGISEAKVDKIIEAASKLVPLGFTSASQLHAQRLEIIQLTTGSRELDQILDGGIETGSITEMYGEFRSGKTQLCHTLCVTCQLPLDQGGGEGKALYIDAEGTFRPQRILQIADRFGLNGADVLENVAYARAYNTDHQSRLLLEAASMMVETRFALMVVDSATALYRTDFSGRGELSARQMHLAKFLRSLQKLADEFGVAVVITNQVVAQVDGAAMFAGPQIKPIGGNIMAHASTTRLFLRKGRGEERICKVISSPCLAEAEARFQISSEGVTDVKD.

The interval 1–22 is disordered; it reads MSSSSAHQKASPPIEEEATEHG. The region spanning 49–78 is the HhH domain; it reads TVESVAYSPRKDLLQIKGISEAKVDKIIEA. An ATP-binding site is contributed by 128–135; that stretch reads GEFRSGKT.

The protein belongs to the RecA family. RAD51 subfamily. As to quaternary structure, self-associates and may interact with XRCC3 homolog. Highly expressed in mitotic and meiotic tissues, but low levels in differentiated tissues.

The protein resides in the nucleus. Its function is as follows. Binds to single and double-stranded DNA and exhibits DNA-dependent ATPase activity. Unwinds duplex DNA. Component of the meiotic recombination pathway. Seems to play a role in mediating chromosome homology search, chromosome pairing and synapsis at early stages and probably chromosome crossing-over at later stages in meiosis. Probably is involved in the repair of meiotic double strand breaks (DBSs) and in homologous recombination. This chain is DNA repair protein RAD51 homolog B (RAD51B), found in Zea mays (Maize).